We begin with the raw amino-acid sequence, 293 residues long: uncharacterized protein (293 aa).

This is an uncharacterized protein from Bos taurus (Bovine).